We begin with the raw amino-acid sequence, 107 residues long: Age-related maculopathy susceptibility protein 2 (107 aa).

The tract at residues 1-21 is disordered; it reads MLRLYPGPMVTEAEGKGGPEM.

As to expression, detected in retina and placenta.

It is found in the cytoplasm. This is Age-related maculopathy susceptibility protein 2 (ARMS2) from Homo sapiens (Human).